A 473-amino-acid chain; its full sequence is Ribulose bisphosphate carboxylase large chain 2 (473 aa).

Substrate-binding residues include Asn116 and Thr166. Lys168 serves as the catalytic Proton acceptor. Residue Lys170 participates in substrate binding. Mg(2+)-binding residues include Lys194, Asp196, and Glu197. Position 194 is an N6-carboxylysine (Lys194). His287 acts as the Proton acceptor in catalysis. The substrate site is built by Arg288, His320, and Ser372.

This sequence belongs to the RuBisCO large chain family. Type I subfamily. In terms of assembly, heterohexadecamer of 8 large chains and 8 small chains. Requires Mg(2+) as cofactor.

The enzyme catalyses 2 (2R)-3-phosphoglycerate + 2 H(+) = D-ribulose 1,5-bisphosphate + CO2 + H2O. The catalysed reaction is D-ribulose 1,5-bisphosphate + O2 = 2-phosphoglycolate + (2R)-3-phosphoglycerate + 2 H(+). Functionally, ruBisCO catalyzes two reactions: the carboxylation of D-ribulose 1,5-bisphosphate, the primary event in carbon dioxide fixation, as well as the oxidative fragmentation of the pentose substrate. Both reactions occur simultaneously and in competition at the same active site. The protein is Ribulose bisphosphate carboxylase large chain 2 of Acidithiobacillus ferrooxidans (strain ATCC 23270 / DSM 14882 / CIP 104768 / NCIMB 8455) (Ferrobacillus ferrooxidans (strain ATCC 23270)).